The following is a 359-amino-acid chain: 3-dehydroquinate synthase (359 aa).

Residues 71-76, 105-109, 129-130, Lys142, and Lys151 contribute to the NAD(+) site; these read DGEAYK, GVIGD, and TT. Zn(2+)-binding residues include Glu184, His247, and His264.

It belongs to the sugar phosphate cyclases superfamily. Dehydroquinate synthase family. The cofactor is Co(2+). It depends on Zn(2+) as a cofactor. Requires NAD(+) as cofactor.

The protein resides in the cytoplasm. It carries out the reaction 7-phospho-2-dehydro-3-deoxy-D-arabino-heptonate = 3-dehydroquinate + phosphate. It functions in the pathway metabolic intermediate biosynthesis; chorismate biosynthesis; chorismate from D-erythrose 4-phosphate and phosphoenolpyruvate: step 2/7. Functionally, catalyzes the conversion of 3-deoxy-D-arabino-heptulosonate 7-phosphate (DAHP) to dehydroquinate (DHQ). The sequence is that of 3-dehydroquinate synthase from Burkholderia ambifaria (strain ATCC BAA-244 / DSM 16087 / CCUG 44356 / LMG 19182 / AMMD) (Burkholderia cepacia (strain AMMD)).